The sequence spans 293 residues: MDVIIDKNSGYCFGVEFAIQMAEDEMATGEPLFCLGDIVHNSMEVERLAKKGLKIIDREELKKLSDCKVLIRAHGEPPETYQLALENNIELVDASCPVVLKLQNRVKASFDAIDSKDGQIVIYGQEGHAEVIGIAGQTGDKAIVITTEKDLDKIDFEKPVTLYSQTTKSTQGFYKMKDLIEARVAEAGKNVDENFEYNDSICRQVSNREPQLRKFSKEFDVVIFVSGKKSSNGKALYGVCKQENERSYFVENETEIEPSWIRATDNVGICGATSTPMWLMEKVQNYIQAHSWN.

Residue cysteine 12 coordinates [4Fe-4S] cluster. (2E)-4-hydroxy-3-methylbut-2-enyl diphosphate-binding residues include histidine 40 and histidine 74. Positions 40 and 74 each coordinate dimethylallyl diphosphate. Histidine 40 and histidine 74 together coordinate isopentenyl diphosphate. Cysteine 96 contributes to the [4Fe-4S] cluster binding site. Residue histidine 128 participates in (2E)-4-hydroxy-3-methylbut-2-enyl diphosphate binding. Histidine 128 is a binding site for dimethylallyl diphosphate. Residue histidine 128 participates in isopentenyl diphosphate binding. The Proton donor role is filled by glutamate 130. Threonine 166 lines the (2E)-4-hydroxy-3-methylbut-2-enyl diphosphate pocket. A [4Fe-4S] cluster-binding site is contributed by cysteine 202. 4 residues coordinate (2E)-4-hydroxy-3-methylbut-2-enyl diphosphate: serine 230, serine 231, asparagine 232, and serine 274. Dimethylallyl diphosphate-binding residues include serine 230, serine 231, asparagine 232, and serine 274. The isopentenyl diphosphate site is built by serine 230, serine 231, asparagine 232, and serine 274.

This sequence belongs to the IspH family. Requires [4Fe-4S] cluster as cofactor.

The enzyme catalyses isopentenyl diphosphate + 2 oxidized [2Fe-2S]-[ferredoxin] + H2O = (2E)-4-hydroxy-3-methylbut-2-enyl diphosphate + 2 reduced [2Fe-2S]-[ferredoxin] + 2 H(+). It carries out the reaction dimethylallyl diphosphate + 2 oxidized [2Fe-2S]-[ferredoxin] + H2O = (2E)-4-hydroxy-3-methylbut-2-enyl diphosphate + 2 reduced [2Fe-2S]-[ferredoxin] + 2 H(+). The protein operates within isoprenoid biosynthesis; dimethylallyl diphosphate biosynthesis; dimethylallyl diphosphate from (2E)-4-hydroxy-3-methylbutenyl diphosphate: step 1/1. Its pathway is isoprenoid biosynthesis; isopentenyl diphosphate biosynthesis via DXP pathway; isopentenyl diphosphate from 1-deoxy-D-xylulose 5-phosphate: step 6/6. In terms of biological role, catalyzes the conversion of 1-hydroxy-2-methyl-2-(E)-butenyl 4-diphosphate (HMBPP) into a mixture of isopentenyl diphosphate (IPP) and dimethylallyl diphosphate (DMAPP). Acts in the terminal step of the DOXP/MEP pathway for isoprenoid precursor biosynthesis. The sequence is that of 4-hydroxy-3-methylbut-2-enyl diphosphate reductase from Cytophaga hutchinsonii (strain ATCC 33406 / DSM 1761 / CIP 103989 / NBRC 15051 / NCIMB 9469 / D465).